The chain runs to 348 residues: Erlin-1 (348 aa).

The Cytoplasmic segment spans residues 1-7; it reads MNMTQAR. A helical membrane pass occupies residues 8–28; that stretch reads VLVAAVVGLVAVLLYASIHKI. Over 29–348 the chain is Lumenal; it reads EEGHLAVYYR…NVIQNKESTG (320 aa). An N-linked (GlcNAc...) asparagine glycan is attached at asparagine 108. Lysine 269 is subject to N6-acetyllysine. Residues 325 to 348 are disordered; the sequence is SSLPSKEALEPSGENVIQNKESTG. Residues 339 to 348 are compositionally biased toward polar residues; it reads NVIQNKESTG.

Belongs to the band 7/mec-2 family. As to quaternary structure, forms a heteromeric complex with ERLIN2. In complex with ERLIN2, interacts with RNF170. Interacts with AMFR and SYVN1. Deubiquitinated by USP25; leading to stabilization. As to expression, expressed in heart, placenta, liver, kidney, pancreas, prostate, testis, ovary and small intestine.

Its subcellular location is the endoplasmic reticulum membrane. Its function is as follows. Component of the ERLIN1/ERLIN2 complex which mediates the endoplasmic reticulum-associated degradation (ERAD) of inositol 1,4,5-trisphosphate receptors (IP3Rs). Involved in regulation of cellular cholesterol homeostasis by regulation the SREBP signaling pathway. Binds cholesterol and may promote ER retention of the SCAP-SREBF complex. (Microbial infection) Required early in hepatitis C virus (HCV) infection to initiate RNA replication, and later in the infection to support infectious virus production. The chain is Erlin-1 from Homo sapiens (Human).